A 547-amino-acid polypeptide reads, in one-letter code: Probable bifunctional tRNA threonylcarbamoyladenosine biosynthesis protein (547 aa).

Residues 1 to 329 (MKNTFILGIE…FRTDDVNVTW (329 aa)) form a kae1 region. Histidine 113, histidine 117, and tyrosine 134 together coordinate Fe cation. L-threonylcarbamoyladenylate-binding positions include 134–138 (YVSGA), aspartate 166, glycine 179, glutamate 183, and asparagine 262. A Fe cation-binding site is contributed by aspartate 290. The Protein kinase domain maps to 340–547 (EISPEAFLRA…EEIKKRARYA (208 aa)). ATP contacts are provided by residues 355-363 (LDNGAEAVI) and lysine 377. The Proton acceptor; for kinase activity role is filled by aspartate 464.

In the N-terminal section; belongs to the KAE1 / TsaD family. The protein in the C-terminal section; belongs to the protein kinase superfamily. Tyr protein kinase family. BUD32 subfamily. In terms of assembly, component of the KEOPS complex that consists of Kae1, Bud32, Cgi121 and Pcc1; the whole complex dimerizes. Fe(2+) is required as a cofactor.

The protein localises to the cytoplasm. It carries out the reaction L-seryl-[protein] + ATP = O-phospho-L-seryl-[protein] + ADP + H(+). It catalyses the reaction L-threonyl-[protein] + ATP = O-phospho-L-threonyl-[protein] + ADP + H(+). The catalysed reaction is L-threonylcarbamoyladenylate + adenosine(37) in tRNA = N(6)-L-threonylcarbamoyladenosine(37) in tRNA + AMP + H(+). Required for the formation of a threonylcarbamoyl group on adenosine at position 37 (t(6)A37) in tRNAs that read codons beginning with adenine. Is a component of the KEOPS complex that is probably involved in the transfer of the threonylcarbamoyl moiety of threonylcarbamoyl-AMP (TC-AMP) to the N6 group of A37. The Kae1 domain likely plays a direct catalytic role in this reaction. The Bud32 domain probably displays kinase activity that regulates Kae1 function. In Methanosarcina acetivorans (strain ATCC 35395 / DSM 2834 / JCM 12185 / C2A), this protein is Probable bifunctional tRNA threonylcarbamoyladenosine biosynthesis protein.